A 522-amino-acid polypeptide reads, in one-letter code: 3'3'-cGAMP-specific phosphodiesterase 2 (522 aa).

The Response regulatory domain occupies cysteine 36–methionine 160. Position 91 is a 4-aspartylphosphate (aspartate 91). The HD-GYP domain occupies leucine 325–aspartate 522. Residues histidine 382 and aspartate 383 each coordinate a divalent metal cation. Lysine 386 functions as the Proton donor in the catalytic mechanism. A divalent metal cation-binding residues include histidine 411, histidine 437, histidine 438, and aspartate 466.

In terms of assembly, homodimer. The cofactor is Mn(2+).

It carries out the reaction 3',3'-cGAMP + H2O = 5'-pApG-3' + H(+). Functionally, phosphodiesterase (PDE) that catalyzes the hydrolysis of 3'3'-cyclic GMP-AMP (3'3'-cGAMP), leading to linear 5'-pApG. Counteracts the function of the 3'3'-cGAMP synthase DncV, and is involved in the modulation of intracellular 3'3'-cGAMP levels. Enhances bacterial chemotaxis and inhibits intestinal colonization in vivo. Thus exerts a crucial role in regulating bacterial infectivity through catalyzing 3'3'-cGAMP degradation. Is specific for 3'3'-cGAMP since it cannot degrade other cGAMP linkage isomers (3'2'-, 2'3'-, and 2'2'-cGAMPs). Is also able to hydrolyze c-di-GMP but not c-di-AMP. This Vibrio cholerae serotype O1 (strain ATCC 39315 / El Tor Inaba N16961) protein is 3'3'-cGAMP-specific phosphodiesterase 2.